Here is a 104-residue protein sequence, read N- to C-terminus: DET1- and DDB1-associated protein 1 (104 aa).

Positions Lys67–Glu77 are enriched in basic and acidic residues. The interval Lys67–Ser104 is disordered.

This sequence belongs to the DDA1 family. As to quaternary structure, component of numerous DCX (DDB1-CUL4-X-box) E3 ubiquitin-protein ligase complexes which consist of a core of DDB1, cullin-4 (CUL4A or CUL4B), DDA1 and RBX1.

The protein operates within protein modification; protein ubiquitination. Functions as a component of numerous distinct DCX (DDB1-CUL4-X-box) E3 ubiquitin-protein ligase complexes which mediate the ubiquitination and subsequent proteasomal degradation of target proteins. In the DCX complexes, acts as a scaffolding subunit required to stabilize the complex. The chain is DET1- and DDB1-associated protein 1 from Danio rerio (Zebrafish).